A 140-amino-acid chain; its full sequence is Lipoprotein MlpD (140 aa).

Residues 1–17 (MKIINILFCLFLLMLNG) form the signal peptide. A lipid anchor (N-palmitoyl cysteine) is attached at Cys18. Cys18 carries S-diacylglycerol cysteine lipidation. The interval 22 to 53 (DTNNSQTKSRQKRDLTQKEATQEKPKSKEELL) is disordered. Positions 33–53 (KRDLTQKEATQEKPKSKEELL) are enriched in basic and acidic residues.

The protein belongs to the Multicopy lipoprotein (Mlp) family.

The protein localises to the cell outer membrane. In terms of biological role, an outer membrane protein that may participate in pathogenesis. Some human Lyme disease patients have antibodies against this protein. The Mlp proteins probably undergo intragenic recombination, generating new alleles. This chain is Lipoprotein MlpD, found in Borreliella burgdorferi (strain ATCC 35210 / DSM 4680 / CIP 102532 / B31) (Borrelia burgdorferi).